Here is a 188-residue protein sequence, read N- to C-terminus: dCTP deaminase (188 aa).

DCTP-binding positions include 111–116 (KSTYAR), 135–137 (TLE), Gln-156, Tyr-170, and Gln-180. Residue Glu-137 is the Proton donor/acceptor of the active site.

Belongs to the dCTP deaminase family. Homotrimer.

The enzyme catalyses dCTP + H2O + H(+) = dUTP + NH4(+). It participates in pyrimidine metabolism; dUMP biosynthesis; dUMP from dCTP (dUTP route): step 1/2. Its function is as follows. Catalyzes the deamination of dCTP to dUTP. This is dCTP deaminase from Dichelobacter nodosus (strain VCS1703A).